The chain runs to 591 residues: Aspartate--tRNA(Asp/Asn) ligase (591 aa).

L-aspartate is bound at residue Glu174. The segment at 198-201 is aspartate; it reads QLFK. Arg220 lines the L-aspartate pocket. Residues 220 to 222 and Gln229 each bind ATP; that span reads RDE. An L-aspartate-binding site is contributed by His450. Glu483 is a binding site for ATP. Residue Arg490 participates in L-aspartate binding. 535-538 is an ATP binding site; sequence GLDR.

The protein belongs to the class-II aminoacyl-tRNA synthetase family. Type 1 subfamily. In terms of assembly, homodimer.

It is found in the cytoplasm. The enzyme catalyses tRNA(Asx) + L-aspartate + ATP = L-aspartyl-tRNA(Asx) + AMP + diphosphate. Its function is as follows. Aspartyl-tRNA synthetase with relaxed tRNA specificity since it is able to aspartylate not only its cognate tRNA(Asp) but also tRNA(Asn). Reaction proceeds in two steps: L-aspartate is first activated by ATP to form Asp-AMP and then transferred to the acceptor end of tRNA(Asp/Asn). The sequence is that of Aspartate--tRNA(Asp/Asn) ligase from Pseudomonas putida (strain W619).